The sequence spans 777 residues: Translation initiation factor IF-2 (777 aa).

Disordered regions lie at residues 30–54 (SPSMGATIVKKRRRKTHDTEEQDEN) and 98–117 (EDSNEKTNDRDSATNTSFKE). Basic and acidic residues predominate over residues 98 to 109 (EDSNEKTNDRDS). Residues 279 to 449 (PKPPIVTFMG…LLIAELMKLE (171 aa)) enclose the tr-type G domain. The G1 stretch occupies residues 288–295 (GHVDHGKT). 288 to 295 (GHVDHGKT) lines the GTP pocket. The tract at residues 313–317 (GITQH) is G2. The G3 stretch occupies residues 334–337 (DTPG). Residues 334–338 (DTPGH) and 388–391 (NKID) contribute to the GTP site. The tract at residues 388-391 (NKID) is G4. The G5 stretch occupies residues 425–427 (SAK).

The protein belongs to the TRAFAC class translation factor GTPase superfamily. Classic translation factor GTPase family. IF-2 subfamily.

Its subcellular location is the cytoplasm. One of the essential components for the initiation of protein synthesis. Protects formylmethionyl-tRNA from spontaneous hydrolysis and promotes its binding to the 30S ribosomal subunits. Also involved in the hydrolysis of GTP during the formation of the 70S ribosomal complex. This is Translation initiation factor IF-2 from Wolbachia sp. subsp. Brugia malayi (strain TRS).